A 344-amino-acid chain; its full sequence is Phosphate acyltransferase (344 aa).

Belongs to the PlsX family. As to quaternary structure, homodimer. Probably interacts with PlsY.

It is found in the cytoplasm. The enzyme catalyses a fatty acyl-[ACP] + phosphate = an acyl phosphate + holo-[ACP]. It functions in the pathway lipid metabolism; phospholipid metabolism. In terms of biological role, catalyzes the reversible formation of acyl-phosphate (acyl-PO(4)) from acyl-[acyl-carrier-protein] (acyl-ACP). This enzyme utilizes acyl-ACP as fatty acyl donor, but not acyl-CoA. This Sphingopyxis alaskensis (strain DSM 13593 / LMG 18877 / RB2256) (Sphingomonas alaskensis) protein is Phosphate acyltransferase.